A 116-amino-acid polypeptide reads, in one-letter code: Large ribosomal subunit protein bL19 (116 aa).

This sequence belongs to the bacterial ribosomal protein bL19 family.

Functionally, this protein is located at the 30S-50S ribosomal subunit interface and may play a role in the structure and function of the aminoacyl-tRNA binding site. The protein is Large ribosomal subunit protein bL19 of Pseudomonas fluorescens (strain ATCC BAA-477 / NRRL B-23932 / Pf-5).